The chain runs to 316 residues: Solute carrier family 25 member 32 (316 aa).

3 Solcar repeats span residues 20–109 (HVRY…IKSY), 118–209 (LEPL…LKLK), and 222–306 (LSTA…VSHF). A run of 6 helical transmembrane segments spans residues 26 to 46 (LVAG…LDLV), 89 to 106 (VWGA…YNAI), 123 to 143 (YLVS…PLWV), 185 to 203 (GFVP…FMAY), 227 to 243 (YISV…AATY), and 281 to 300 (GIAP…FVVY).

Belongs to the mitochondrial carrier (TC 2.A.29) family.

It is found in the mitochondrion inner membrane. The catalysed reaction is FAD(in) = FAD(out). In terms of biological role, facilitates flavin adenine dinucleotide (FAD) translocation across the mitochondrial inner membrane into the mitochondrial matrix where it acts as a redox cofactor to assist flavoenzyme activities in fundamental metabolic processes including fatty acid beta-oxidation, amino acid and choline metabolism as well as mitochondrial electron transportation. In particular, provides FAD to DLD dehydrogenase of the glycine cleavage system, part of mitochondrial one-carbon metabolic pathway involved in neural tube closure in early embryogenesis. This is Solute carrier family 25 member 32 from Mus musculus (Mouse).